The following is a 423-amino-acid chain: Deoxyguanosinetriphosphate triphosphohydrolase-like protein (423 aa).

One can recognise an HD domain in the interval 66–216 (RLTHSLEVAQ…MDFSDDIAYS (151 aa)).

It belongs to the dGTPase family. Type 2 subfamily.

The polypeptide is Deoxyguanosinetriphosphate triphosphohydrolase-like protein (Corynebacterium diphtheriae (strain ATCC 700971 / NCTC 13129 / Biotype gravis)).